Consider the following 347-residue polypeptide: Dihydroorotase (347 aa).

His-13 and His-15 together coordinate Zn(2+). Substrate-binding positions include 15–17 (HLR) and Asn-41. Zn(2+) is bound by residues Lys-99, His-136, and His-174. Lys-99 carries the N6-carboxylysine modification. His-136 contributes to the substrate binding site. Leu-219 contributes to the substrate binding site. Asp-247 is a Zn(2+) binding site. Residue Asp-247 is part of the active site. Residues His-251 and Ala-263 each contribute to the substrate site.

Belongs to the metallo-dependent hydrolases superfamily. DHOase family. Class II DHOase subfamily. In terms of assembly, homodimer. Requires Zn(2+) as cofactor.

The enzyme catalyses (S)-dihydroorotate + H2O = N-carbamoyl-L-aspartate + H(+). It functions in the pathway pyrimidine metabolism; UMP biosynthesis via de novo pathway; (S)-dihydroorotate from bicarbonate: step 3/3. Its function is as follows. Catalyzes the reversible cyclization of carbamoyl aspartate to dihydroorotate. The polypeptide is Dihydroorotase (Sinorhizobium medicae (strain WSM419) (Ensifer medicae)).